The sequence spans 615 residues: UvrABC system protein C (615 aa).

Residues 14 to 91 (TSPGCYIHKD…IKENKPKYNI (78 aa)) enclose the GIY-YIG domain. One can recognise a UVR domain in the interval 196–231 (NKIIDELKGKMAAAAQTMEFERAAEYRDLIQAIGTL).

This sequence belongs to the UvrC family. In terms of assembly, interacts with UvrB in an incision complex.

It localises to the cytoplasm. Its function is as follows. The UvrABC repair system catalyzes the recognition and processing of DNA lesions. UvrC both incises the 5' and 3' sides of the lesion. The N-terminal half is responsible for the 3' incision and the C-terminal half is responsible for the 5' incision. This is UvrABC system protein C from Streptococcus pneumoniae serotype 19F (strain G54).